Consider the following 233-residue polypeptide: Mediator of RNA polymerase II transcription subunit 7 (233 aa).

Lysine 185 is covalently cross-linked (Glycyl lysine isopeptide (Lys-Gly) (interchain with G-Cter in SUMO1); alternate). Lysine 185 participates in a covalent cross-link: Glycyl lysine isopeptide (Lys-Gly) (interchain with G-Cter in SUMO2); alternate. Residues 185–213 (KTEPMDTDDSNNCIGQNEQQRENSGHRRD) form a disordered region. Residue serine 194 is modified to Phosphoserine. Residues 203–213 (QQRENSGHRRD) show a composition bias toward basic and acidic residues.

It belongs to the Mediator complex subunit 7 family. As to quaternary structure, component of the Mediator complex, which is composed of MED1, MED4, MED6, MED7, MED8, MED9, MED10, MED11, MED12, MED13, MED13L, MED14, MED15, MED16, MED17, MED18, MED19, MED20, MED21, MED22, MED23, MED24, MED25, MED26, MED27, MED29, MED30, MED31, CCNC, CDK8 and CDC2L6/CDK11. The MED12, MED13, CCNC and CDK8 subunits form a distinct module termed the CDK8 module. Mediator containing the CDK8 module is less active than Mediator lacking this module in supporting transcriptional activation. Individual preparations of the Mediator complex lacking one or more distinct subunits have been variously termed ARC, CRSP, DRIP, PC2, SMCC and TRAP.

It localises to the nucleus. Component of the Mediator complex, a coactivator involved in the regulated transcription of nearly all RNA polymerase II-dependent genes. Mediator functions as a bridge to convey information from gene-specific regulatory proteins to the basal RNA polymerase II transcription machinery. Mediator is recruited to promoters by direct interactions with regulatory proteins and serves as a scaffold for the assembly of a functional preinitiation complex with RNA polymerase II and the general transcription factors. The sequence is that of Mediator of RNA polymerase II transcription subunit 7 (MED7) from Bos taurus (Bovine).